A 122-amino-acid chain; its full sequence is Large ribosomal subunit protein uL14 (122 aa).

Belongs to the universal ribosomal protein uL14 family. In terms of assembly, part of the 50S ribosomal subunit. Forms a cluster with proteins L3 and L19. In the 70S ribosome, L14 and L19 interact and together make contacts with the 16S rRNA in bridges B5 and B8.

Binds to 23S rRNA. Forms part of two intersubunit bridges in the 70S ribosome. In Alteromonas mediterranea (strain DSM 17117 / CIP 110805 / LMG 28347 / Deep ecotype), this protein is Large ribosomal subunit protein uL14.